The following is a 1439-amino-acid chain: Probable histone acetyltransferase HAC-like 2 (1439 aa).

2 disordered regions span residues 1–43 and 313–335; these read MKQG…ASAD and YGISPNKPLQRHVNPSTRSTPTP. Residues 325–335 show a composition bias toward polar residues; the sequence is VNPSTRSTPTP. A TAZ-type zinc finger spans residues 607–687; the sequence is ENTKQYHAQA…NEHCHVCCKA (81 aa). Residues 827-933 form a PHD-type; degenerate zinc finger; the sequence is KIHCHVQQET…EYTCFKCYIE (107 aa). In terms of domain architecture, CBP/p300-type HAT spans 948 to 1383; sequence VRGAKDLPRT…MLYHLHNPTG (436 aa). A coiled-coil region spans residues 964–989; the sequence is EERLFKRLREERQERANKLKTSLDEV. Acetyl-CoA contacts are provided by residues 1071–1073, 1090–1091, and Trp-1146; these read LDS and RT. Residues 1265-1328 form a ZZ-type zinc finger; the sequence is HLQYSCSHCC…ILHPVEIVGV (64 aa). Positions 1270, 1273, 1285, 1288, 1294, 1297, 1310, and 1318 each coordinate Zn(2+).

The protein localises to the nucleus. The catalysed reaction is L-lysyl-[protein] + acetyl-CoA = N(6)-acetyl-L-lysyl-[protein] + CoA + H(+). Functionally, acetyltransferase enzyme. Acetylates histones, giving a specific tag for transcriptional activation. The protein is Probable histone acetyltransferase HAC-like 2 of Oryza sativa subsp. japonica (Rice).